A 124-amino-acid chain; its full sequence is Fluoride-specific ion channel FluC 2 (124 aa).

Helical transmembrane passes span 36–56 (TFLINVSGSVVMGLIAGYLAF), 66–86 (LFVMTGVLGGYTTFSAFSLDT), and 100–120 (LYAIGSVVLAVVGLFAGLALV). Na(+) contacts are provided by Gly74 and Thr77.

This sequence belongs to the fluoride channel Fluc/FEX (TC 1.A.43) family.

The protein localises to the cell inner membrane. It catalyses the reaction fluoride(in) = fluoride(out). Its activity is regulated as follows. Na(+) is not transported, but it plays an essential structural role and its presence is essential for fluoride channel function. In terms of biological role, fluoride-specific ion channel. Important for reducing fluoride concentration in the cell, thus reducing its toxicity. This Nitrobacter hamburgensis (strain DSM 10229 / NCIMB 13809 / X14) protein is Fluoride-specific ion channel FluC 2.